We begin with the raw amino-acid sequence, 204 residues long: NAD(P)H-quinone oxidoreductase subunit M, chloroplastic (204 aa).

Residues 1–27 (MASTSMSLTRACKVHAVLACSIPSVSS) constitute a chloroplast transit peptide.

The protein belongs to the NDH complex subunit M family. As to quaternary structure, part of the chloroplast NDH complex, composed of a mixture of chloroplast and nucleus encoded subunits. Component of the NDH subcomplex A, at least composed of ndhH, ndhI, ndhJ, ndhK, ndhL, ndhM, ndhN and ndhO.

It is found in the plastid. It localises to the chloroplast thylakoid membrane. The catalysed reaction is a plastoquinone + NADH + (n+1) H(+)(in) = a plastoquinol + NAD(+) + n H(+)(out). It catalyses the reaction a plastoquinone + NADPH + (n+1) H(+)(in) = a plastoquinol + NADP(+) + n H(+)(out). NDH shuttles electrons from NAD(P)H:plastoquinone, via FMN and iron-sulfur (Fe-S) centers, to quinones in the photosynthetic chain and possibly in a chloroplast respiratory chain. The immediate electron acceptor for the enzyme in this species is believed to be plastoquinone. Couples the redox reaction to proton translocation, and thus conserves the redox energy in a proton gradient. The protein is NAD(P)H-quinone oxidoreductase subunit M, chloroplastic of Physcomitrium patens (Spreading-leaved earth moss).